A 75-amino-acid polypeptide reads, in one-letter code: ATP synthase subunit c (75 aa).

2 helical membrane passes run Phe-8–Ile-28 and Ala-54–Val-74.

The protein belongs to the ATPase C chain family. As to quaternary structure, F-type ATPases have 2 components, F(1) - the catalytic core - and F(0) - the membrane proton channel. F(1) has five subunits: alpha(3), beta(3), gamma(1), delta(1), epsilon(1). F(0) has three main subunits: a(1), b(2) and c(10-14). The alpha and beta chains form an alternating ring which encloses part of the gamma chain. F(1) is attached to F(0) by a central stalk formed by the gamma and epsilon chains, while a peripheral stalk is formed by the delta and b chains.

The protein localises to the cell membrane. Functionally, f(1)F(0) ATP synthase produces ATP from ADP in the presence of a proton or sodium gradient. F-type ATPases consist of two structural domains, F(1) containing the extramembraneous catalytic core and F(0) containing the membrane proton channel, linked together by a central stalk and a peripheral stalk. During catalysis, ATP synthesis in the catalytic domain of F(1) is coupled via a rotary mechanism of the central stalk subunits to proton translocation. In terms of biological role, key component of the F(0) channel; it plays a direct role in translocation across the membrane. A homomeric c-ring of between 10-14 subunits forms the central stalk rotor element with the F(1) delta and epsilon subunits. The protein is ATP synthase subunit c of Wolbachia sp. subsp. Brugia malayi (strain TRS).